The primary structure comprises 451 residues: Cyclin-dependent kinase 18 (451 aa).

The tract at residues 39 to 61 (RNEDGRDEPGQLSPGVQYQQRQN) is disordered. Phosphoserine is present on Ser-51. The segment covering 52 to 61 (PGVQYQQRQN) has biased composition (polar residues). Ser-66 and Ser-109 each carry phosphoserine. The region spanning 121–402 (YVKLDKLGEG…AEAALSHPYF (282 aa)) is the Protein kinase domain. ATP-binding positions include 127-135 (LGEGTYATV) and Lys-150. Asp-242 functions as the Proton acceptor in the catalytic mechanism. Phosphoserine occurs at positions 417 and 420.

This sequence belongs to the protein kinase superfamily. CMGC Ser/Thr protein kinase family. CDC2/CDKX subfamily. In brain, kidney, intestine and at a much lower level, in fetal tissues.

The catalysed reaction is L-seryl-[protein] + ATP = O-phospho-L-seryl-[protein] + ADP + H(+). It carries out the reaction L-threonyl-[protein] + ATP = O-phospho-L-threonyl-[protein] + ADP + H(+). May play a role in signal transduction cascades in terminally differentiated cells. The protein is Cyclin-dependent kinase 18 (Cdk18) of Rattus norvegicus (Rat).